Consider the following 367-residue polypeptide: C-glycoside deglycosidase alpha subunit (367 aa).

E146 contributes to the Mg(2+) binding site. The active-site Proton acceptor is the H148. Mg(2+) contacts are provided by D178, H276, and E312.

It belongs to the C-glycoside deglycosidase alpha subunit family. As to quaternary structure, heterodimer composed of an alpha subunit (CarB1) and a beta subunit (CarC1). It depends on Mg(2+) as a cofactor.

It catalyses the reaction 3''-dehydroisovitexin = 1,5-anhydro-D-erythro-hex-1-en-3-ulose + apigenin. Activity is strongly reduced in the presence of chelating agents. Its function is as follows. Carbon-carbon bond-cleaving enzyme which participates in the metabolism of C-glycosides. Acts on the C6-glycosylated compound 3''-dehydroisovitexin (3''-oxo-isovitexin). Shows weak activity with 3''-dehydroisoorientin (3''-oxo-homoorientin) and 3'-dehydromangiferin (3'-oxo-mangiferin). The polypeptide is C-glycoside deglycosidase alpha subunit (Arthrobacter globiformis (strain ATCC 8010 / DSM 20124 / JCM 1332 / NBRC 12137 / NCIMB 8907 / NRRL B-2979 / 168)).